The chain runs to 245 residues: Orotidine 5'-phosphate decarboxylase (245 aa).

Residues D22, K44, 71–80 (DLKFHDIPNT), T131, R192, Q201, G221, and R222 each bind substrate. Catalysis depends on K73, which acts as the Proton donor.

It belongs to the OMP decarboxylase family. Type 1 subfamily. In terms of assembly, homodimer.

It catalyses the reaction orotidine 5'-phosphate + H(+) = UMP + CO2. It functions in the pathway pyrimidine metabolism; UMP biosynthesis via de novo pathway; UMP from orotate: step 2/2. Functionally, catalyzes the decarboxylation of orotidine 5'-monophosphate (OMP) to uridine 5'-monophosphate (UMP). This is Orotidine 5'-phosphate decarboxylase from Salmonella choleraesuis (strain SC-B67).